The sequence spans 322 residues: Protein farnesyltransferase/geranylgeranyltransferase type-1 subunit alpha (322 aa).

The disordered stretch occupies residues 1 to 27; the sequence is MSSSEEDDGYVPFSKRPEWSDVKPLAQ. 6 PFTA repeats span residues 62–95, 103–136, 138–171, 173–205, 213–246, and 287–321; these read RVLD…EQDE, QEMN…IGSD, KEKE…RDWN, ELAM…NPSP, REVE…KIST, and NSLN…LKLI.

This sequence belongs to the protein prenyltransferase subunit alpha family. As to quaternary structure, heterodimer of fntA and fntB (farnesyltransferase). Heterodimer of an alpha and a beta subunit. Mg(2+) is required as a cofactor.

It carries out the reaction L-cysteinyl-[protein] + (2E,6E)-farnesyl diphosphate = S-(2E,6E)-farnesyl-L-cysteinyl-[protein] + diphosphate. The enzyme catalyses geranylgeranyl diphosphate + L-cysteinyl-[protein] = S-geranylgeranyl-L-cysteinyl-[protein] + diphosphate. Its function is as follows. Catalyzes the transfer of a farnesyl or geranyl-geranyl moiety from farnesyl or geranyl-geranyl diphosphate to a cysteine at the fourth position from the C-terminus of several proteins having the C-terminal sequence Cys-aliphatic-aliphatic-X. The alpha subunit is thought to participate in a stable complex with the substrate. The beta subunit binds the peptide substrate. This Dictyostelium discoideum (Social amoeba) protein is Protein farnesyltransferase/geranylgeranyltransferase type-1 subunit alpha (fntA).